The chain runs to 108 residues: Tyrosine-protein phosphatase 5 (108 aa).

The 108-residue stretch at 1 to 108 (QESTVIVMLT…QGNNPSPIIV (108 aa)) folds into the Tyrosine-protein phosphatase domain. Position 78 (D78) interacts with substrate.

The protein belongs to the protein-tyrosine phosphatase family.

It catalyses the reaction O-phospho-L-tyrosyl-[protein] + H2O = L-tyrosyl-[protein] + phosphate. This is Tyrosine-protein phosphatase 5 (STY-5) from Styela plicata (Wrinkled sea squirt).